A 277-amino-acid polypeptide reads, in one-letter code: NH(3)-dependent NAD(+) synthetase (277 aa).

36–43 (GLSGGIDS) is an ATP binding site. Position 42 (aspartate 42) interacts with Mg(2+). Residue arginine 118 coordinates deamido-NAD(+). An ATP-binding site is contributed by threonine 138. Position 143 (glutamate 143) interacts with Mg(2+). Residues lysine 167 and serine 189 each contribute to the ATP site.

This sequence belongs to the NAD synthetase family. As to quaternary structure, homodimer.

It catalyses the reaction deamido-NAD(+) + NH4(+) + ATP = AMP + diphosphate + NAD(+) + H(+). It participates in cofactor biosynthesis; NAD(+) biosynthesis; NAD(+) from deamido-NAD(+) (ammonia route): step 1/1. Its function is as follows. Catalyzes the ATP-dependent amidation of deamido-NAD to form NAD. Uses ammonia as a nitrogen source. In Chlorobaculum tepidum (strain ATCC 49652 / DSM 12025 / NBRC 103806 / TLS) (Chlorobium tepidum), this protein is NH(3)-dependent NAD(+) synthetase.